The following is a 117-amino-acid chain: UPF0251 protein cbdbA217 (117 aa).

It belongs to the UPF0251 family.

This Dehalococcoides mccartyi (strain CBDB1) protein is UPF0251 protein cbdbA217.